Consider the following 161-residue polypeptide: Cytochrome c-type biogenesis protein CcmE (161 aa).

Topologically, residues 1–8 are cytoplasmic; it reads MNPRRKKR. The chain crosses the membrane as a helical; Signal-anchor for type II membrane protein span at residues 9–29; it reads LGIVLAIFIGISATIGLMLYA. Residues 30 to 161 lie on the Periplasmic side of the membrane; sequence LNQNMDLFYT…SSEQKQGSGE (132 aa). Heme contacts are provided by His129 and Tyr133. Residues 142–161 are disordered; it reads MKKTHEPLQYSSEQKQGSGE. Residues 150-161 show a composition bias toward polar residues; the sequence is QYSSEQKQGSGE.

The protein belongs to the CcmE/CycJ family.

The protein localises to the cell inner membrane. Functionally, heme chaperone required for the biogenesis of c-type cytochromes. Transiently binds heme delivered by CcmC and transfers the heme to apo-cytochromes in a process facilitated by CcmF and CcmH. The protein is Cytochrome c-type biogenesis protein CcmE of Vibrio parahaemolyticus serotype O3:K6 (strain RIMD 2210633).